Here is a 505-residue protein sequence, read N- to C-terminus: ATP synthase subunit alpha, chloroplastic (505 aa).

172–179 contacts ATP; that stretch reads GDRQTGKT.

Belongs to the ATPase alpha/beta chains family. F-type ATPases have 2 components, CF(1) - the catalytic core - and CF(0) - the membrane proton channel. CF(1) has five subunits: alpha(3), beta(3), gamma(1), delta(1), epsilon(1). CF(0) has four main subunits: a, b, b' and c.

It localises to the plastid. The protein resides in the chloroplast thylakoid membrane. It carries out the reaction ATP + H2O + 4 H(+)(in) = ADP + phosphate + 5 H(+)(out). Produces ATP from ADP in the presence of a proton gradient across the membrane. The alpha chain is a regulatory subunit. In Antithamnion sp. (Red alga), this protein is ATP synthase subunit alpha, chloroplastic.